The chain runs to 653 residues: Fusexin 1 (653 aa).

The signal sequence occupies residues 1–23 (MKNGLKASVVALFFLLAASSASA). Residues 24–559 (ATNSVDTVTY…MEKALSGNAG (536 aa)) lie on the Extracellular side of the membrane. Intrachain disulfides connect Cys-126-Cys-166, Cys-397-Cys-440, Cys-467-Cys-490, and Cys-502-Cys-519. The interval 154–159 (DTWTGQ) is fusion loop. Residues 560–580 (ALTWAQLLLSFIGFLAGFALV) form a helical membrane-spanning segment. Topologically, residues 581-600 (GVKLGKMVDGLATEFIPLSD) are cytoplasmic. A run of 2 helical transmembrane segments spans residues 601–621 (AVVR…AVYQ) and 622–642 (LVTN…TGYL). The Cytoplasmic portion of the chain corresponds to 643–653 (YLKGTTPDINL).

The protein belongs to the HAP2/GCS1 family. Fusexin 1 subfamily. Homotrimer stabilized by interdomain contacts and numerous Ca(2+) and Na(+) ions.

Its subcellular location is the cell surface. The protein localises to the cell membrane. Its function is as follows. Exhibits fusogenic activity. Mediates cell-cell fusion in mammalian cells (bilateral fusion). This chain is Fusexin 1, found in Haloferax sp. (strain Q22).